Reading from the N-terminus, the 275-residue chain is Replication protein A 32 kDa subunit (275 aa).

Positions 23-47 are disordered; it reads MQSPGGFGSPAPTQGEKKSRSRSQQ. The OB DNA-binding region spans 76 to 150; it reads VTIVGIVRHA…KSVVAFKIAP (75 aa).

The protein belongs to the replication factor A protein 2 family. Component of the replication protein A complex (RPA/RP-A), a heterotrimeric complex composed of RPA1, RPA2 and RPA3. In terms of processing, differentially phosphorylated throughout the cell cycle, becoming phosphorylated at the G1-S transition and dephosphorylated in late mitosis. Phosphorylation increases upon replication fork stalling.

It localises to the nucleus. The protein localises to the PML body. Its function is as follows. As part of the heterotrimeric replication protein A complex (RPA/RP-A), binds and stabilizes single-stranded DNA intermediates, that form during DNA replication or upon DNA stress. It prevents their reannealing and in parallel, recruits and activates different proteins and complexes involved in DNA metabolism. Thereby, it plays an essential role both in DNA replication and the cellular response to DNA damage. This Xenopus tropicalis (Western clawed frog) protein is Replication protein A 32 kDa subunit (rpa2).